The sequence spans 430 residues: Nitroalkane oxidase (430 aa).

Residues 132–135, 140–142, 170–172, arginine 301, glutamine 311, 372–376, and 397–401 contribute to the FAD site; these read LVFS, VAN, WAT, NAVGI, and IFDGG. The Proton acceptor role is filled by aspartate 399.

Belongs to the acyl-CoA dehydrogenase family. Homotetramer. FAD serves as cofactor.

It catalyses the reaction a primary nitroalkane + O2 + H2O = an aldehyde + nitrite + H2O2 + H(+). The enzyme catalyses a secondary nitroalkane + O2 + H2O = a ketone + nitrite + H2O2 + H(+). Nitroalkane oxidase (NAO) catalyzes the oxidation of nitroalkanes to the corresponding aldehydes or ketones with the release of nitrite and the consumption of molecular oxygen to yield hydrogen peroxide. NAO is unusual, since it catalyzes substrate oxidation by removing a substrate proton to form a carbanion intermediate. Prefers longer nitroalkanes, with 1-nitrohexane having the highest activity. The sequence is that of Nitroalkane oxidase from Podospora anserina (strain S / ATCC MYA-4624 / DSM 980 / FGSC 10383) (Pleurage anserina).